The following is a 249-amino-acid chain: Vitamin B12 import ATP-binding protein BtuD (249 aa).

The ABC transporter domain occupies 5 to 233 (MQLQDVAETT…PNLAQAYGMN (229 aa)). ATP is bound at residue 33–40 (GPNGAGKS).

The protein belongs to the ABC transporter superfamily. Vitamin B12 importer (TC 3.A.1.13.1) family. The complex is composed of two ATP-binding proteins (BtuD), two transmembrane proteins (BtuC) and a solute-binding protein (BtuF).

It is found in the cell inner membrane. It carries out the reaction an R-cob(III)alamin(out) + ATP + H2O = an R-cob(III)alamin(in) + ADP + phosphate + H(+). Part of the ABC transporter complex BtuCDF involved in vitamin B12 import. Responsible for energy coupling to the transport system. The chain is Vitamin B12 import ATP-binding protein BtuD from Citrobacter koseri (strain ATCC BAA-895 / CDC 4225-83 / SGSC4696).